The primary structure comprises 398 residues: Acetyl-CoA acetyltransferase erg10B, cytosolic (398 aa).

The active-site Acyl-thioester intermediate is the cysteine 92. Tyrosine 187 is a binding site for K(+). CoA-binding residues include asparagine 229 and lysine 232. K(+) is bound by residues alanine 249, proline 250, and serine 252. Serine 253 contacts CoA. Valine 350 is a K(+) binding site. Catalysis depends on proton acceptor residues histidine 354 and cysteine 384. Asparagine 385 contacts chloride.

Belongs to the thiolase-like superfamily. Thiolase family. Homotetramer. K(+) serves as cofactor.

It localises to the cytoplasm. It is found in the cytosol. It catalyses the reaction 2 acetyl-CoA = acetoacetyl-CoA + CoA. Its pathway is metabolic intermediate biosynthesis; (R)-mevalonate biosynthesis; (R)-mevalonate from acetyl-CoA: step 1/3. Activity is increased by monovalent cations such as K(+), Rb(+) or Cs(+). In terms of biological role, acetyl-CoA acetyltransferase; part of the first module of ergosterol biosynthesis pathway that includes the early steps of the pathway, conserved across all eukaryotes, and which results in the formation of mevalonate from acetyl-coenzyme A (acetyl-CoA). In this module, the cytosolic acetyl-CoA acetyltransferase erg10B catalyzes the formation of acetoacetyl-CoA. The hydroxymethylglutaryl-CoA synthases AFUA_8G07210 and AFUA_3G10660 then condense acetyl-CoA with acetoacetyl-CoA to form HMG-CoA. The rate-limiting step of the early module is the reduction to mevalonate by the 3-hydroxy-3-methylglutaryl-coenzyme A (HMG-CoA) reductases hmg1 and hmg2. Mevalonate is also a precursor for the extracellular siderophore triacetylfusarinine C (TAFC). This is Acetyl-CoA acetyltransferase erg10B, cytosolic from Aspergillus fumigatus (strain CBS 144.89 / FGSC A1163 / CEA10) (Neosartorya fumigata).